The sequence spans 388 residues: 4-hydroxy-3-methylbut-2-en-1-yl diphosphate synthase (flavodoxin) (388 aa).

Residues Cys-281, Cys-284, Cys-316, and Glu-323 each coordinate [4Fe-4S] cluster.

The protein belongs to the IspG family. The cofactor is [4Fe-4S] cluster.

The catalysed reaction is (2E)-4-hydroxy-3-methylbut-2-enyl diphosphate + oxidized [flavodoxin] + H2O + 2 H(+) = 2-C-methyl-D-erythritol 2,4-cyclic diphosphate + reduced [flavodoxin]. It participates in isoprenoid biosynthesis; isopentenyl diphosphate biosynthesis via DXP pathway; isopentenyl diphosphate from 1-deoxy-D-xylulose 5-phosphate: step 5/6. In terms of biological role, converts 2C-methyl-D-erythritol 2,4-cyclodiphosphate (ME-2,4cPP) into 1-hydroxy-2-methyl-2-(E)-butenyl 4-diphosphate. This Arthrobacter sp. (strain FB24) protein is 4-hydroxy-3-methylbut-2-en-1-yl diphosphate synthase (flavodoxin).